Here is a 54-residue protein sequence, read N- to C-terminus: Large ribosomal subunit protein bL33B (54 aa).

This sequence belongs to the bacterial ribosomal protein bL33 family.

The chain is Large ribosomal subunit protein bL33B (rpmG2) from Streptomyces coelicolor (strain ATCC BAA-471 / A3(2) / M145).